Consider the following 155-residue polypeptide: Small ribosomal subunit protein uS7cz/uS7cy (155 aa).

This sequence belongs to the universal ribosomal protein uS7 family. Part of the 30S ribosomal subunit.

The protein localises to the plastid. The protein resides in the chloroplast. Its function is as follows. One of the primary rRNA binding proteins, it binds directly to 16S rRNA where it nucleates assembly of the head domain of the 30S subunit. In Phaseolus vulgaris (Kidney bean), this protein is Small ribosomal subunit protein uS7cz/uS7cy (rps7-A).